Here is a 188-residue protein sequence, read N- to C-terminus: F-box only protein 36 (188 aa).

The 47-residue stretch at phenylalanine 91 to isoleucine 137 folds into the F-box domain.

In terms of assembly, directly interacts with SKP1 and CUL1.

In terms of biological role, substrate-recognition component of the SCF (SKP1-CUL1-F-box protein)-type E3 ubiquitin ligase complex. The protein is F-box only protein 36 (Fbxo36) of Mus musculus (Mouse).